A 714-amino-acid polypeptide reads, in one-letter code: Fatty acid oxidation complex subunit alpha (714 aa).

The enoyl-CoA hydratase stretch occupies residues 1–190; sequence MEMASAFTLN…KLGLVDDVVP (190 aa). The tract at residues 306-714 is 3-hydroxyacyl-CoA dehydrogenase; the sequence is APLNSVGILG…FWKTTATDLQ (409 aa).

It in the N-terminal section; belongs to the enoyl-CoA hydratase/isomerase family. In the central section; belongs to the 3-hydroxyacyl-CoA dehydrogenase family. Heterotetramer of two alpha chains (FadJ) and two beta chains (FadI).

Its subcellular location is the cytoplasm. The catalysed reaction is a (3S)-3-hydroxyacyl-CoA = a (2E)-enoyl-CoA + H2O. The enzyme catalyses a 4-saturated-(3S)-3-hydroxyacyl-CoA = a (3E)-enoyl-CoA + H2O. It carries out the reaction a (3S)-3-hydroxyacyl-CoA + NAD(+) = a 3-oxoacyl-CoA + NADH + H(+). It catalyses the reaction (3S)-3-hydroxybutanoyl-CoA = (3R)-3-hydroxybutanoyl-CoA. It functions in the pathway lipid metabolism; fatty acid beta-oxidation. Functionally, catalyzes the formation of a hydroxyacyl-CoA by addition of water on enoyl-CoA. Also exhibits 3-hydroxyacyl-CoA epimerase and 3-hydroxyacyl-CoA dehydrogenase activities. In Shigella boydii serotype 18 (strain CDC 3083-94 / BS512), this protein is Fatty acid oxidation complex subunit alpha.